Here is a 455-residue protein sequence, read N- to C-terminus: T-box protein VegT-A (455 aa).

Disordered stretches follow at residues 21-40, 229-262, and 295-346; these read SNCA…SSQD, REQE…DSPE, and ANQG…EPSS. Positions 57-230 form a DNA-binding region, T-box; it reads LWSQFHQEGT…HNPFAKGFRE (174 aa). Residues 229 to 241 are compositionally biased toward basic and acidic residues; it reads REQERSHKRDDVL. The span at 308 to 324 shows a compositional bias: polar residues; it reads GANQEQQVPTSSSNFYN.

As to quaternary structure, forms a repression complex on the promoters of the nodal/nr1 and siamois genes with the maternal factors tcf7l1/tcf3 and pouf5.1/oct-25. Interacts (via C-terminus) with tcf7l1/tcf3 (via N-terminus). Also interacts with the other POU-domain transcription factors pou5f1.2/oct-91 and pou5f1.3/oct-60. As to expression, uniformly distributed in stage I oocytes but becomes localized to the vegetal hemisphere by stage II and remains so thereafter throughout oogenesis and the early embryonic cleavage stages. Zygotic expression parallels blastopore formation and shifts from dorsal expression in the marginal zone of late blastula and early gastrula stages to a ventral/lateral expression at the posterior end of later stage embryos. Expression is excluded from the notochord. In tailbud and tadpole stages, expressed exclusively in a subset of posterior Rohon-Beard neurons.

Its subcellular location is the nucleus. Its function is as follows. Transcription factor required for both mesoderm and endoderm formation in the embryo; signaling determinants and concentration levels may determine which germ layer is formed. Acts together with beta-catenin to activate genes that are responsible for mesoderm induction including wnt-8, eomes t/bra, siamois, mix1 and sox17. Directly binds to promoter DNA. Patterns the mesoderm along the dorsoventral and posterior axis. Activates siamois gene transcription when alone or in combination with beta-catenin, but inhibits siamois transcription in combination with pou5f1.1/oct-25. In Xenopus laevis (African clawed frog), this protein is T-box protein VegT-A (vegt-a).